The following is an 861-amino-acid chain: ToMV resistance protein Tm-2(2) (861 aa).

Positions 63–83 form a coiled coil; that stretch reads VKNLLKDIQELAGDVEDLLDD. One can recognise an NB-ARC domain in the interval 162–388; the sequence is DDFNMLQAKL…LESMGHKVQD (227 aa). 185–192 contacts ATP; the sequence is GMPGLGKT. LRR repeat units follow at residues 225–248, 305–327, 388–411, 449–472, 510–536, 585–608, 609–631, 652–680, 689–710, 712–735, 736–758, 784–810, and 811–835; these read LDIA…NLRS, LHAL…IFNF, DGCA…CFLY, LAED…TYNG, VARL…KLEK, MTCL…IVKL, TRLE…VWES, ISSF…FFEP, LRKL…IFSP, LKAL…LSSY, PHIA…SFPP, LRKL…GYSF, and PQLE…DVSM.

Belongs to the disease resistance NB-LRR family. (Microbial infection) Interacts with tobamoviruses mouvement protein (e.g. tobacco mosaic virus (TMV) MP, AC P03583) at the plasma membrane; this interaction triggers defense responses leading to programmed cell death. In terms of assembly, binds to HSP90 proteins (e.g. HSP90-1 and Nicotiana benthamiana HSP90-1); this interaction seems required for defense responses toward tobamoviruses.

It is found in the cell membrane. Inhibitor of viral mouvements which confers resistance to some tobamoviruses including tomato mosaic virus (ToMV) (e.g. strains L, B7 and ToMV1-2) and tobacco mosaic virus (TMV), but not to resistance-breaking isolates (e.g. LIIA and ToMV2(2)) ToMV and tomato brown rugose fruit virus (ToBRFV). Elicits a hypersensitive reaction in response to avirulent (Avr) movement proteins from resistance inducing tobamoviruses (e.g. ToMV and TMV) strains, thus leading to programmed cell death; this local extreme resistance requires rbcS. This Solanum lycopersicum (Tomato) protein is ToMV resistance protein Tm-2(2).